A 291-amino-acid polypeptide reads, in one-letter code: Phosphate import ATP-binding protein PstB (291 aa).

One can recognise an ABC transporter domain in the interval 44–286 (VKAREVNVFY…PEEKRTQDYI (243 aa)). 76–83 (GPSGCGKS) serves as a coordination point for ATP.

This sequence belongs to the ABC transporter superfamily. Phosphate importer (TC 3.A.1.7) family. The complex is composed of two ATP-binding proteins (PstB), two transmembrane proteins (PstC and PstA) and a solute-binding protein (PstS).

It localises to the cell inner membrane. It carries out the reaction phosphate(out) + ATP + H2O = ADP + 2 phosphate(in) + H(+). Functionally, part of the ABC transporter complex PstSACB involved in phosphate import. Responsible for energy coupling to the transport system. The polypeptide is Phosphate import ATP-binding protein PstB (Chelativorans sp. (strain BNC1)).